A 281-amino-acid chain; its full sequence is MSTYLVGDVHGCLVELKALLAQVSFNPEQDTLWLTGDLVARGPDSLQVLRFVRSLGSSVRMVLGNHDLHLLAVYAGISRNKPKDRLNDLLTAPDADELINWLRRQPILQVDEDLKLVMAHAGITPQWDLPTALVCAREVESILSSDSYPLFLDAMYGDMPNHWSPELSGLARLRFSTNVFTRMRYCFSGGQLDMLCKEQPGQAPSLLKPWFDLPSQVAGEYAIAFGHWASLEGKGTPENIYALDTGCCWGGELTMLRWDDKRYFTQPSLSSNTELSGDITL.

Belongs to the Ap4A hydrolase family.

The enzyme catalyses P(1),P(4)-bis(5'-adenosyl) tetraphosphate + H2O = 2 ADP + 2 H(+). In terms of biological role, hydrolyzes diadenosine 5',5'''-P1,P4-tetraphosphate to yield ADP. The protein is Bis(5'-nucleosyl)-tetraphosphatase, symmetrical of Pectobacterium atrosepticum (strain SCRI 1043 / ATCC BAA-672) (Erwinia carotovora subsp. atroseptica).